A 210-amino-acid chain; its full sequence is Ribonuclease HII (210 aa).

Residues 16–207 form the RNase H type-2 domain; it reads AIVVGVDEVG…VKKCIISTKN (192 aa). Positions 22, 23, and 116 each coordinate a divalent metal cation.

Belongs to the RNase HII family. The cofactor is Mn(2+). Mg(2+) serves as cofactor.

The protein localises to the cytoplasm. The catalysed reaction is Endonucleolytic cleavage to 5'-phosphomonoester.. Endonuclease that specifically degrades the RNA of RNA-DNA hybrids. The sequence is that of Ribonuclease HII from Anaplasma phagocytophilum (strain HZ).